A 600-amino-acid polypeptide reads, in one-letter code: MSMRTEYCGLVTEHLLGQTVSLCGWVQRRRDHGGVIFIDLRDREGLVQVVCDPDRAEMFATAEGVRNEFCVQIKGLVRNRPEGTVNAGLKSGKIEVLCHELNVLNASVTPPFQLDDDNLSETTRLTHRVLDLRRPQMQHNLRLRYRVAIEARKYLDEQGFIDIETPMLTKSTPEGARDYLVPSRVNAGQFFALPQSPQLFKQLLMVANFDRYYQITKCFRDEDLRADRQPEFTQIDCETSFLGEQEIRDLFEDMIRHIFKTTIDVELDATFPVMPYSEAMARFGSDKPDLRVQLEFTELTDAMKDVDFKVFSTPANAKDGRVAALRVPKGGELSRGDIDGYTEFVRIYGAKGLAWIKVNEKAKGRDGLQSPIVKNLHDASIAAILERTGAEDGDIIFFAADRAKVVNDSLGALRLKIGHSEFGKANGLVQAGWKPLWVVDFPMFEYDDEDARYVAAHHPFTSPKDEHLEYLETDPGRCLAKAYDMVLNGWEIGGGSVRIHREEVQSKVFRALKIGAEEAQLKFGFLLDALQYGAPPHGGIAFGLDRIVTMMAGADSIRDVIAFPKTQRAQDLLTQAPSPVDERQLRELHIRLRQPEQPKA.

An L-aspartate-binding site is contributed by Glu174. The interval 198-201 is aspartate; sequence QLFK. Arg220 serves as a coordination point for L-aspartate. ATP contacts are provided by residues 220-222 and Gln229; that span reads RDE. His457 provides a ligand contact to L-aspartate. Residue Glu491 coordinates ATP. Arg498 is a binding site for L-aspartate. 543–546 contributes to the ATP binding site; it reads GLDR.

It belongs to the class-II aminoacyl-tRNA synthetase family. Type 1 subfamily. In terms of assembly, homodimer.

It localises to the cytoplasm. The catalysed reaction is tRNA(Asx) + L-aspartate + ATP = L-aspartyl-tRNA(Asx) + AMP + diphosphate. Functionally, aspartyl-tRNA synthetase with relaxed tRNA specificity since it is able to aspartylate not only its cognate tRNA(Asp) but also tRNA(Asn). Reaction proceeds in two steps: L-aspartate is first activated by ATP to form Asp-AMP and then transferred to the acceptor end of tRNA(Asp/Asn). In Burkholderia ambifaria (strain ATCC BAA-244 / DSM 16087 / CCUG 44356 / LMG 19182 / AMMD) (Burkholderia cepacia (strain AMMD)), this protein is Aspartate--tRNA(Asp/Asn) ligase.